The sequence spans 513 residues: NADH-quinone oxidoreductase subunit N (513 aa).

A run of 14 helical transmembrane segments spans residues 20–40, 49–69, 88–108, 117–137, 144–164, 178–198, 219–239, 260–280, 295–315, 323–343, 351–371, 394–414, 429–451, and 474–494; these read SVGFFIPEIYLSLLFMILIVV, STLLSVFSLVGLAGSLYFIYQ, FAIFFKYFFVLSGMLAVVITM, ISSMGEYYALVVAMVVGMMMM, LMIFLSMELVSFTAFILAGYF, LIYGAVSSGLMIYGFSLIYGV, FVMLFAALLVLAGFGYKIGAV, LSVASKAAGFALLMRFVYVAL, WFTLLVILAVASMIYGNVVAL, LLAYSSIAHAGYALLGVIVMD, LFYLLSYLLMNFGAFFVVVLI, GAALTVFLISLVGLPPTIGFI, IFMWLALIGILTSVISLYYYMLI, and LVAQLFMGALMLLTIYFGLFF.

The protein belongs to the complex I subunit 2 family. NDH-1 is composed of 14 different subunits. Subunits NuoA, H, J, K, L, M, N constitute the membrane sector of the complex.

The protein resides in the cell inner membrane. The catalysed reaction is a quinone + NADH + 5 H(+)(in) = a quinol + NAD(+) + 4 H(+)(out). NDH-1 shuttles electrons from NADH, via FMN and iron-sulfur (Fe-S) centers, to quinones in the respiratory chain. The immediate electron acceptor for the enzyme in this species is believed to be a menaquinone. Couples the redox reaction to proton translocation (for every two electrons transferred, four hydrogen ions are translocated across the cytoplasmic membrane), and thus conserves the redox energy in a proton gradient. This chain is NADH-quinone oxidoreductase subunit N, found in Chlorobium chlorochromatii (strain CaD3).